Here is a 151-residue protein sequence, read N- to C-terminus: Deoxyuridine 5'-triphosphate nucleotidohydrolase (151 aa).

Substrate is bound by residues 70-72, asparagine 83, 87-89, and methionine 97; these read RSG and LID.

It belongs to the dUTPase family. It depends on Mg(2+) as a cofactor.

The catalysed reaction is dUTP + H2O = dUMP + diphosphate + H(+). It functions in the pathway pyrimidine metabolism; dUMP biosynthesis; dUMP from dCTP (dUTP route): step 2/2. In terms of biological role, this enzyme is involved in nucleotide metabolism: it produces dUMP, the immediate precursor of thymidine nucleotides and it decreases the intracellular concentration of dUTP so that uracil cannot be incorporated into DNA. This chain is Deoxyuridine 5'-triphosphate nucleotidohydrolase, found in Pseudomonas aeruginosa (strain LESB58).